Reading from the N-terminus, the 455-residue chain is Bifunctional protein GlmU (455 aa).

The tract at residues 1–228 (MYKCALVLAA…FEETIGVNSR (228 aa)) is pyrophosphorylase. Residues 8-11 (LAAG), K22, Q73, and 78-79 (GT) each bind UDP-N-acetyl-alpha-D-glucosamine. D103 contacts Mg(2+). Residues G140, E154, N169, and N226 each contribute to the UDP-N-acetyl-alpha-D-glucosamine site. N226 is a binding site for Mg(2+). Residues 229 to 249 (AQLAQAEEILKDRINLKHMEN) form a linker region. The segment at 250 to 455 (GVTLIDPKTT…GWVDKKGLKK (206 aa)) is N-acetyltransferase. Residues R331 and K349 each contribute to the UDP-N-acetyl-alpha-D-glucosamine site. Catalysis depends on H361, which acts as the Proton acceptor. Positions 364 and 375 each coordinate UDP-N-acetyl-alpha-D-glucosamine. Acetyl-CoA-binding positions include 384 to 385 (NY), A421, and R438.

In the N-terminal section; belongs to the N-acetylglucosamine-1-phosphate uridyltransferase family. The protein in the C-terminal section; belongs to the transferase hexapeptide repeat family. As to quaternary structure, homotrimer. It depends on Mg(2+) as a cofactor.

The protein localises to the cytoplasm. It catalyses the reaction alpha-D-glucosamine 1-phosphate + acetyl-CoA = N-acetyl-alpha-D-glucosamine 1-phosphate + CoA + H(+). The enzyme catalyses N-acetyl-alpha-D-glucosamine 1-phosphate + UTP + H(+) = UDP-N-acetyl-alpha-D-glucosamine + diphosphate. It functions in the pathway nucleotide-sugar biosynthesis; UDP-N-acetyl-alpha-D-glucosamine biosynthesis; N-acetyl-alpha-D-glucosamine 1-phosphate from alpha-D-glucosamine 6-phosphate (route II): step 2/2. It participates in nucleotide-sugar biosynthesis; UDP-N-acetyl-alpha-D-glucosamine biosynthesis; UDP-N-acetyl-alpha-D-glucosamine from N-acetyl-alpha-D-glucosamine 1-phosphate: step 1/1. The protein operates within bacterial outer membrane biogenesis; LPS lipid A biosynthesis. Its function is as follows. Catalyzes the last two sequential reactions in the de novo biosynthetic pathway for UDP-N-acetylglucosamine (UDP-GlcNAc). The C-terminal domain catalyzes the transfer of acetyl group from acetyl coenzyme A to glucosamine-1-phosphate (GlcN-1-P) to produce N-acetylglucosamine-1-phosphate (GlcNAc-1-P), which is converted into UDP-GlcNAc by the transfer of uridine 5-monophosphate (from uridine 5-triphosphate), a reaction catalyzed by the N-terminal domain. In Clostridium botulinum (strain Eklund 17B / Type B), this protein is Bifunctional protein GlmU.